The sequence spans 487 residues: MEETSLRRRREDEKSTHSTELKTTSLQKEVGLLSGICIIVGTIIGSGIFISPKSVLANTESVGPCLIIWAACGILATLGALCFAELGTMITKSGGEYPYLMEAFGPIPAYLFSWTSLIVMKPSSFAIICLSFSEYVCAAFYSGCKPPAVVVKLLAAAAILFITTVNALSVRLGSYVQNVFTAAKMVIVAIIIISGLVFLAQGNVKNFQNSFEGTQTSVGAISLAFYNGLWAYDGWNQLNYITEELRNPYRNLPMAIVIGIPLVTVCYILMNIAYFTVMTPTELLQSQAVAVTFGDRVLYPASWVVPLFVAFSTIGAANGTCFTAGRLIYVAGREGHMLKVLSYISVKRLTPAPALIFYGIIAIIYIIPGDINSLVNYFSFAAWLFYGMTILGLVVMRFTRKDLERPIKVPLFIPIIVILVSLFLILAPIISEPAWEYLYCVLFILSGLIFYFLFVYYKFGWAQRISRPVTKHLQMLMEVVPPEKDPE.

Positions Met1 to Glu20 are disordered. The Cytoplasmic segment spans residues Met1–Gly31. Phosphoserine is present on Ser18. The helical transmembrane segment at Leu32 to Val55 threads the bilayer. Ile43 to Gly47 contributes to the L-arginine binding site. Over Leu56–Val62 the chain is Extracellular. A helical transmembrane segment spans residues Gly63–Ala84. Residues Glu85–Tyr110 lie on the Cytoplasmic side of the membrane. A helical transmembrane segment spans residues Leu111–Cys137. Residues Ala138 to Pro147 lie on the Extracellular side of the membrane. Helical transmembrane passes span Ala148–Ser169 and Val170–Ile193. The Extracellular portion of the chain corresponds to Ser194–Ser217. The chain crosses the membrane as a helical span at residues Val218 to Leu238. Asp233 is a binding site for L-arginine. The Cytoplasmic segment spans residues Asn239–Asn251. The helical transmembrane segment at Leu252–Tyr274 threads the bilayer. Over Phe275 to Ser302 the chain is Extracellular. A helical transmembrane segment spans residues Trp303 to Gly325. The Cytoplasmic segment spans residues Arg326 to Pro351. A run of 2 helical transmembrane segments spans residues Ala352 to Asp370 and Ile371 to Leu391. At Gly392–Pro410 the chain is on the cytoplasmic side. The chain crosses the membrane as a helical span at residues Leu411 to Ser431. Over Glu432 to Ala434 the chain is Extracellular. The helical transmembrane segment at Trp435–Phe450 threads the bilayer. Residues Tyr451–Glu487 lie on the Cytoplasmic side of the membrane.

It belongs to the amino acid-polyamine-organocation (APC) superfamily. As to quaternary structure, disulfide-linked heterodimer composed of the catalytic light chain subunit SLC7A9 and the heavy chain subunit SLC3A1. The heterodimer is the minimal functional unit. Assembles in heterotetramers (dimers of heterodimers) and higher order oligomers; the oligomerization is mediated by SLC3A1 likely to prevent degradation and facilitate heteromer trafficking to the plasma membrane. Interacts with CAV1. As to expression, expressed in the brush border membrane in the kidney (at protein level).

It localises to the apical cell membrane. The catalysed reaction is L-leucine(out) + L-arginine(in) = L-leucine(in) + L-arginine(out). It catalyses the reaction L-histidine(out) + L-arginine(in) = L-histidine(in) + L-arginine(out). The enzyme catalyses L-arginine(in) + L-phenylalanine(out) = L-arginine(out) + L-phenylalanine(in). It carries out the reaction L-cysteine(out) + L-arginine(in) = L-cysteine(in) + L-arginine(out). The catalysed reaction is L-cystine(out) + L-arginine(in) = L-cystine(in) + L-arginine(out). It catalyses the reaction L-lysine(out) + L-arginine(in) = L-lysine(in) + L-arginine(out). Associates with SLC3A1 to form a functional transporter complex that mediates the electrogenic exchange between cationic amino acids and neutral amino acids, with a stoichiometry of 1:1. Has system b(0,+)-like activity with high affinity for extracellular cationic amino acids and L-cystine and lower affinity for intracellular neutral amino acids. Substrate exchange is driven by high concentration of intracellular neutral amino acids and the intracellular reduction of L-cystine to L-cysteine. Required for reabsorption of L-cystine and dibasic amino acids across the brush border membrane in renal proximal tubules. This chain is b(0,+)-type amino acid transporter 1 (Slc7a9), found in Mus musculus (Mouse).